A 95-amino-acid chain; its full sequence is Turripeptide OL184 (95 aa).

Post-translationally, contains 5 disulfide bonds. Expressed by the venom duct.

The protein localises to the secreted. In terms of biological role, acts as a neurotoxin by inhibiting an ion channel. This is Turripeptide OL184 from Iotyrris olangoensis (Sea snail).